Reading from the N-terminus, the 230-residue chain is UPF0502 protein Patl_1161 (230 aa).

It belongs to the UPF0502 family.

The sequence is that of UPF0502 protein Patl_1161 from Pseudoalteromonas atlantica (strain T6c / ATCC BAA-1087).